A 322-amino-acid polypeptide reads, in one-letter code: Nitrilase (322 aa).

The CN hydrolase domain occupies 5-283; sequence VRVGAVQSEP…EAILTADIDL (279 aa). The Proton acceptor role is filled by Glu45. Lys127 is an active-site residue. The active-site Nucleophile is the Cys162.

This sequence belongs to the carbon-nitrogen hydrolase superfamily. Nitrilase family.

The catalysed reaction is a nitrile + 2 H2O = a carboxylate + NH4(+). In terms of biological role, nitrilase that hydrolyzes preferentially 4-cyanopyridine. The protein is Nitrilase of Talaromyces marneffei (strain ATCC 18224 / CBS 334.59 / QM 7333) (Penicillium marneffei).